Here is a 182-residue protein sequence, read N- to C-terminus: uncharacterized protein (182 aa).

It belongs to the staphylococcal tandem lipoprotein family.

This is an uncharacterized protein from Staphylococcus haemolyticus (strain JCSC1435).